A 458-amino-acid chain; its full sequence is Dynein regulatory complex protein 10 (458 aa).

Coiled coils occupy residues 96–137 (GQTL…HKVN), 209–255 (IQDI…KNHL), and 285–379 (QVRL…IRAE). One can recognise an IQ domain in the interval 397-426 (MVRAATLIQAVWKGYLVRSILRSKKKKRGK). Residues 419-458 (SKKKKRGKGKGKDKGKGKEKPKEEKAKEKKPKAKGKGKKK) are disordered. Basic and acidic residues predominate over residues 428-445 (KGKDKGKGKEKPKEEKAK). A compositionally biased stretch (basic residues) spans 446 to 458 (EKKPKAKGKGKKK).

This sequence belongs to the DRC10 family. Component of the nexin-dynein regulatory complex (N-DRC). Interacts with CFAP52.

The protein localises to the cytoplasm. Its subcellular location is the cytoskeleton. It localises to the flagellum axoneme. Its function is as follows. Component of the nexin-dynein regulatory complex (N-DRC), a key regulator of ciliary/flagellar motility which maintains the alignment and integrity of the distal axoneme and regulates microtubule sliding in motile axonemes. The protein is Dynein regulatory complex protein 10 (Iqcd) of Mus musculus (Mouse).